We begin with the raw amino-acid sequence, 671 residues long: Vinexin (671 aa).

At Gln2 the chain carries N-acetylalanine. Arg6 is subject to Phosphoserine. Disordered stretches follow at residues 46–111 (LNFQ…TKDS), 166–215 (TFEE…RPGA), 249–268 (LETGQRPKKPLVDDPGEKPS), 295–324 (TRLPSPKSSPAPRRAPEQRPPAGPASAWSS), and 337–383 (SLSP…KKRK). The span at 88–108 (PSASTKIPASQHTQNWSATWT) shows a compositional bias: polar residues. Positions 115 to 187 (DKRWVKYEGI…GAQQRPAHRP (73 aa)) constitute a SoHo domain. At Ser348 the chain carries Phosphoserine. Over residues 359–368 (PSSTRDPSAS) the composition is skewed to polar residues. SH3 domains lie at 380 to 439 (KKRK…VLPA) and 454 to 515 (LEYG…VSRE). Positions 380–515 (KKRKAARLKF…PASYVQVSRE (136 aa)) are binds to vinculin. A Phosphoserine modification is found at Ser395. Residues 519 to 611 (RLCDDGPQLP…LGTSSPNTSQ (93 aa)) form a disordered region. Ser530 is subject to Phosphoserine; by MAPK1. Low complexity predominate over residues 535–553 (AAARSARHPSSPSALRSPA). Ser544, Ser545, Ser547, Ser551, and Ser563 each carry phosphoserine. Residues 560 to 584 (GQTSPRRTGFSFPTQEPRPQTQNLG) are compositionally biased toward polar residues. The 60-residue stretch at 612 to 671 (IHWTPYRAMYQYRPQNEDELELREGDRVDVMQQCDDGWFVGVSRRTQKFGTFPGNYVAPV) folds into the SH3 3 domain. The binds to SOS stretch occupies residues 612 to 671 (IHWTPYRAMYQYRPQNEDELELREGDRVDVMQQCDDGWFVGVSRRTQKFGTFPGNYVAPV).

As to quaternary structure, interacts with DLG5 through its third SH3 domain. Interacts with vinculin by the first two SH3 domains and the proline rich region of vinculin. Binds to SOS (guanine nucleotide exchange factor of RAS and RAC), through its third SH3 domain. The formation of this complex is down-regulated by phosphorylation of SOS. Interacts with INPPL1/SHIP2, SAFB2, SOCS7 and SRCIN1. Interacts with FASLG. Interacts with MAPK1/ERK2. Phosphorylated at Ser-530 by MAPK1/ERK2 during cell spreading. As to expression, both isoforms are expressed in different tissues like heart, placenta, brain, skeletal muscle and pancreas. Isoform beta is especially found in liver.

The protein resides in the cell junction. The protein localises to the cytoplasm. Its subcellular location is the cytoskeleton. It is found in the nucleus. In terms of biological role, vinexin alpha isoform promotes up-regulation of actin stress fiber formation. Vinexin beta isoform plays a role in cell spreading and enhances the activation of JNK/SAPK in response to EGF stimulation by using its third SH3 domain. The chain is Vinexin (SORBS3) from Homo sapiens (Human).